The sequence spans 364 residues: Alanine racemase (364 aa).

Catalysis depends on Lys35, which acts as the Proton acceptor; specific for D-alanine. N6-(pyridoxal phosphate)lysine is present on Lys35. Arg131 serves as a coordination point for substrate. Catalysis depends on Tyr256, which acts as the Proton acceptor; specific for L-alanine. Position 304 (Met304) interacts with substrate.

Belongs to the alanine racemase family. Pyridoxal 5'-phosphate serves as cofactor.

The enzyme catalyses L-alanine = D-alanine. It functions in the pathway amino-acid biosynthesis; D-alanine biosynthesis; D-alanine from L-alanine: step 1/1. Catalyzes the interconversion of L-alanine and D-alanine. May also act on other amino acids. The polypeptide is Alanine racemase (alr) (Halorhodospira halophila (strain DSM 244 / SL1) (Ectothiorhodospira halophila (strain DSM 244 / SL1))).